The following is a 418-amino-acid chain: Voltage-gated ClC-type chloride channel ClcB (418 aa).

The next 10 membrane-spanning stretches (helical) occupy residues 5 to 25 (LLIA…FRHA), 54 to 74 (LLTP…WQKF), 146 to 166 (LWIA…PLAG), 168 to 188 (LFIA…PVII), 222 to 242 (ALII…LTLM), 260 to 280 (LALG…VWGN), 291 to 311 (APPL…AVLA), 316 to 336 (GAPG…GMLY), 352 to 372 (LLLG…APIM), and 380 to 400 (MTGE…ASVI).

This sequence belongs to the chloride channel (TC 2.A.49) family. ClcB subfamily.

The protein resides in the cell inner membrane. Probably acts as an electrical shunt for an outwardly-directed proton pump that is linked to amino acid decarboxylation, as part of the extreme acid resistance (XAR) response. The chain is Voltage-gated ClC-type chloride channel ClcB from Escherichia coli O9:H4 (strain HS).